The following is a 429-amino-acid chain: UDP-glucuronate 4-epimerase 1 (429 aa).

The next 2 helical transmembrane spans lie at 36-56 (FLWALFLIALTASYLSFQSFV) and 87-107 (GISVLVTGATGFVGSHVSLAL). 89 to 120 (SVLVTGATGFVGSHVSLALRKRGDGVVGLDNF) contributes to the NAD(+) binding site. Tyr239 acts as the Proton acceptor in catalysis.

Belongs to the NAD(P)-dependent epimerase/dehydratase family. Homodimer. As to expression, in root stele, leaves, siliques, flowers, pollen and stems.

Its subcellular location is the golgi apparatus. It localises to the golgi stack membrane. The catalysed reaction is UDP-alpha-D-glucuronate = UDP-alpha-D-galacturonate. Inhibited by UDP-Xylose. Functionally, UDP-D-glucuronate 4-epimerase involved in the synthesis of the negatively charged monosaccharide that forms the backbone of pectic cell wall components. The protein is UDP-glucuronate 4-epimerase 1 (GAE1) of Arabidopsis thaliana (Mouse-ear cress).